The following is a 143-amino-acid chain: D-aminoacyl-tRNA deacylase (143 aa).

A Gly-cisPro motif, important for rejection of L-amino acids motif is present at residues 135–136; that stretch reads GP.

It belongs to the DTD family. Homodimer.

The protein localises to the cytoplasm. It catalyses the reaction glycyl-tRNA(Ala) + H2O = tRNA(Ala) + glycine + H(+). The catalysed reaction is a D-aminoacyl-tRNA + H2O = a tRNA + a D-alpha-amino acid + H(+). In terms of biological role, an aminoacyl-tRNA editing enzyme that deacylates mischarged D-aminoacyl-tRNAs. Also deacylates mischarged glycyl-tRNA(Ala), protecting cells against glycine mischarging by AlaRS. Acts via tRNA-based rather than protein-based catalysis; rejects L-amino acids rather than detecting D-amino acids in the active site. By recycling D-aminoacyl-tRNA to D-amino acids and free tRNA molecules, this enzyme counteracts the toxicity associated with the formation of D-aminoacyl-tRNA entities in vivo and helps enforce protein L-homochirality. This chain is D-aminoacyl-tRNA deacylase, found in Mycobacterium bovis (strain ATCC BAA-935 / AF2122/97).